We begin with the raw amino-acid sequence, 505 residues long: ATP synthase subunit alpha (505 aa).

169 to 176 (GDRKTGKT) contacts ATP.

It belongs to the ATPase alpha/beta chains family. As to quaternary structure, F-type ATPases have 2 components, CF(1) - the catalytic core - and CF(0) - the membrane proton channel. CF(1) has five subunits: alpha(3), beta(3), gamma(1), delta(1), epsilon(1). CF(0) has three main subunits: a(1), b(2) and c(9-12). The alpha and beta chains form an alternating ring which encloses part of the gamma chain. CF(1) is attached to CF(0) by a central stalk formed by the gamma and epsilon chains, while a peripheral stalk is formed by the delta and b chains.

It is found in the cell membrane. The catalysed reaction is ATP + H2O + 4 H(+)(in) = ADP + phosphate + 5 H(+)(out). Its function is as follows. Produces ATP from ADP in the presence of a proton gradient across the membrane. The alpha chain is a regulatory subunit. This is ATP synthase subunit alpha from Pediococcus pentosaceus (strain ATCC 25745 / CCUG 21536 / LMG 10740 / 183-1w).